The chain runs to 301 residues: Transcription elongation factor A protein 1 (301 aa).

Met-1 is modified (N-acetylmethionine). The region spanning 3–80 (DEVVRIAKKM…KSWKKLLDGP (78 aa)) is the TFIIS N-terminal domain. Lys-55 participates in a covalent cross-link: Glycyl lysine isopeptide (Lys-Gly) (interchain with G-Cter in ubiquitin). A phosphoserine mark is found at Ser-57, Ser-81, Ser-97, and Ser-100. Basic and acidic residues predominate over residues 76-93 (LLDGPSTDKDPEEKKKEP). A disordered region spans residues 76-139 (LLDGPSTDKD…FPRAPSTSDS (64 aa)). The TFIIS central domain maps to 140–256 (VRLKCREMLA…EHQMAKTGGT (117 aa)). The TFIIS-type zinc finger occupies 259–299 (DLFTCGKCKKKNCTYTQVQTRSADEPMTTFVVCNECGNRWK). Positions 263, 266, 291, and 294 each coordinate Zn(2+).

Belongs to the TFS-II family. Interacts with EAF2. Associates with UBR5 and forms a transcription regulatory complex made of CDK9, Pol II, UBR5 and TCEA1/TFIIS. Part of TBP-based Pol II pre-initiation complex (PIC), in which Pol II core assembles with general transcription factors and other specific initiation factors including GTF2E1, GTF2E2, GTF2F1, GTF2F2, TCEA1, ERCC2, ERCC3, GTF2H2, GTF2H3, GTF2H4, GTF2H5, GTF2A1, GTF2A2, GTF2B and TBP; this large multi-subunit PIC complex mediates DNA unwinding and targets Pol II core to the transcription start site where the first phosphodiester bond forms.

The protein resides in the nucleus. Its function is as follows. Necessary for efficient RNA polymerase II transcription elongation past template-encoded arresting sites. The arresting sites in DNA have the property of trapping a certain fraction of elongating RNA polymerases that pass through, resulting in locked ternary complexes. Cleavage of the nascent transcript by S-II allows the resumption of elongation from the new 3'-terminus. This is Transcription elongation factor A protein 1 (Tcea1) from Mus musculus (Mouse).